The chain runs to 259 residues: Small ribosomal subunit protein uS7m (259 aa).

The N-terminal 39 residues, 1–39 (MLRLIKQPLFRCASSGHLMKESLVFIHQTRTFQVGKFTS), are a transit peptide targeting the mitochondrion. A Phosphothreonine modification is found at Thr157.

Belongs to the universal ribosomal protein uS7 family. Component of the mitochondrial small ribosomal subunit (mt-SSU). Mature yeast 74S mitochondrial ribosomes consist of a small (37S) and a large (54S) subunit. The 37S small subunit contains a 15S ribosomal RNA (15S mt-rRNA) and at least 32 different proteins. The 54S large subunit contains a 21S rRNA (21S mt-rRNA) and at least 45 different proteins.

The protein localises to the mitochondrion. Component of the mitochondrial ribosome (mitoribosome), a dedicated translation machinery responsible for the synthesis of mitochondrial genome-encoded proteins, including at least some of the essential transmembrane subunits of the mitochondrial respiratory chain. The mitoribosomes are attached to the mitochondrial inner membrane and translation products are cotranslationally integrated into the membrane. The polypeptide is Small ribosomal subunit protein uS7m (rsm7) (Schizosaccharomyces pombe (strain 972 / ATCC 24843) (Fission yeast)).